The chain runs to 238 residues: Protein E6 (238 aa).

The span at 40–51 shows a compositional bias: basic and acidic residues; sequence KETTTREQKHET. 2 disordered regions span residues 40 to 64 and 210 to 238; these read KETT…EEQE and EFNE…EFEP. A compositionally biased stretch (acidic residues) spans 227 to 238; that stretch reads EEFEESEEEFEP.

As to expression, it is predominantly expressed in fiber cells.

The protein localises to the secreted. It is found in the cell wall. The protein is Protein E6 (E6) of Gossypium hirsutum (Upland cotton).